The following is a 411-amino-acid chain: Flagellum-associated coiled-coil domain-containing protein 1 (411 aa).

Positions 52-77 (SQPAKSTAFPRDKAQSRKLEESNKAP) are disordered. Residues 61–74 (PRDKAQSRKLEESN) are compositionally biased toward basic and acidic residues. 2 coiled-coil regions span residues 124-220 (SDII…LKNM) and 278-328 (NESF…VVLE). Position 353 is an N6-acetyllysine (K353). Residues 355–385 (FQTKLAEAEEKYKSTIQVLTEENNSLRQKVL) are a coiled coil.

It localises to the cytoplasm. It is found in the cytoplasmic granule. Its subcellular location is the cell projection. The protein resides in the cilium. The protein localises to the flagellum. This Rattus norvegicus (Rat) protein is Flagellum-associated coiled-coil domain-containing protein 1.